The chain runs to 396 residues: Cathepsin E (396 aa).

An N-terminal signal peptide occupies residues 1–19; that stretch reads MKTLPLLLLLLLDLGQAQG. Residues 20–53 constitute a propeptide, activation peptide; sequence TLDRVPLRRQPSLRKKLRAQGQLSEFWKAHKVDM. In terms of domain architecture, Peptidase A1 spans 78–392; that stretch reads YFGTISIGSP…DRGSNRVGLA (315 aa). A glycan (N-linked (GlcNAc...) asparagine) is linked at N90. D96 is an active-site residue. Disulfide bonds link C109/C114 and C272/C276. Residue D281 is part of the active site. C314 and C351 form a disulfide bridge.

It belongs to the peptidase A1 family. Homodimer; disulfide-linked. Glycosylated. The nature of the carbohydrate chain varies between cell types.

It localises to the endosome. It catalyses the reaction Similar to cathepsin D, but slightly broader specificity.. May have a role in immune function. Probably involved in the processing of antigenic peptides during MHC class II-mediated antigen presentation. May play a role in activation-induced lymphocyte depletion in the thymus, and in neuronal degeneration and glial cell activation in the brain. The chain is Cathepsin E (CTSE) from Oryctolagus cuniculus (Rabbit).